The following is a 582-amino-acid chain: Putative BTB/POZ domain-containing protein At3g08660 (582 aa).

Positions 1-21 (MGSDSTLSLPSSSPPCNNRSS) are disordered. Positions 36–103 (GDIIVVVDGE…CYGINFDITA (68 aa)) constitute a BTB domain. The NPH3 domain maps to 196-466 (EMWTEELSAL…VRVLYTEQLR (271 aa)). Position 407 is a phosphotyrosine (tyrosine 407). The tract at residues 558-582 (GGETRQKVNRKSRSVSERKSSRSGR) is disordered. The segment covering 571 to 582 (SVSERKSSRSGR) has biased composition (basic and acidic residues).

This sequence belongs to the NPH3 family.

The protein operates within protein modification; protein ubiquitination. In terms of biological role, may act as a substrate-specific adapter of an E3 ubiquitin-protein ligase complex (CUL3-RBX1-BTB) which mediates the ubiquitination and subsequent proteasomal degradation of target proteins. The chain is Putative BTB/POZ domain-containing protein At3g08660 from Arabidopsis thaliana (Mouse-ear cress).